A 349-amino-acid chain; its full sequence is MKEVGIVGYGSDLPKYRIKAEEIAKAWGKDAEAIKKGLVVNEKSVPGPDEDSATIAVQAARRALSRSGINPKNIGAVYVGSESHPYAVKPTSGIVAEAVCTSPEVTAADLEFACKAGTAGIQMCMGLVSSGMMDYAMAVGVDTAQGAPGDALEYTAAAGGAAYIIGGKKEELIAKFNGTYSYTTDTPDFWRREHEHYPKHGGRFTGEPAYFRHVLSAAKGMMEKMDTTTKDYDYCVFHQPNGKFYLSAAKQLGFNENQYRYGLLTPYLGNTYSGAVPLGLSNILDHSKTGDRIFVVSYGSGAGSDAFDITVTDRISEVINKAVTTEELLSRKKYIDYAVYLKYRGKIRM.

(3S)-3-hydroxy-3-methylglutaryl-CoA-binding residues include aspartate 30 and alanine 31. Glutamate 82 acts as the Proton donor/acceptor in catalysis. Cysteine 114 and threonine 155 together coordinate (3S)-3-hydroxy-3-methylglutaryl-CoA. Cysteine 114 serves as the catalytic Acyl-thioester intermediate. Arginine 203 contributes to the CoA binding site. The (3S)-3-hydroxy-3-methylglutaryl-CoA site is built by threonine 205 and histidine 238. Histidine 238 acts as the Proton donor/acceptor in catalysis. CoA is bound at residue lysine 243. (3S)-3-hydroxy-3-methylglutaryl-CoA-binding residues include asparagine 270 and serine 300.

Belongs to the thiolase-like superfamily. Archaeal HMG-CoA synthase family. As to quaternary structure, interacts with acetoacetyl-CoA thiolase that catalyzes the precedent step in the pathway and with a DUF35 protein. The acetoacetyl-CoA thiolase/HMG-CoA synthase complex channels the intermediate via a fused CoA-binding site, which allows for efficient coupling of the endergonic thiolase reaction with the exergonic HMGCS reaction.

The catalysed reaction is acetoacetyl-CoA + acetyl-CoA + H2O = (3S)-3-hydroxy-3-methylglutaryl-CoA + CoA + H(+). Its pathway is metabolic intermediate biosynthesis; (R)-mevalonate biosynthesis; (R)-mevalonate from acetyl-CoA: step 2/3. Its function is as follows. Catalyzes the condensation of acetyl-CoA with acetoacetyl-CoA to form 3-hydroxy-3-methylglutaryl-CoA (HMG-CoA). Functions in the mevalonate (MVA) pathway leading to isopentenyl diphosphate (IPP), a key precursor for the biosynthesis of isoprenoid compounds that are building blocks of archaeal membrane lipids. This chain is Hydroxymethylglutaryl-CoA synthase, found in Methanococcus vannielii (strain ATCC 35089 / DSM 1224 / JCM 13029 / OCM 148 / SB).